Reading from the N-terminus, the 427-residue chain is Enolase (427 aa).

Glutamine 163 is a (2R)-2-phosphoglycerate binding site. Glutamate 205 (proton donor) is an active-site residue. Positions 242, 285, and 312 each coordinate Mg(2+). Positions 337, 366, 367, and 388 each coordinate (2R)-2-phosphoglycerate. Residue lysine 337 is the Proton acceptor of the active site.

The protein belongs to the enolase family. Mg(2+) is required as a cofactor.

It localises to the cytoplasm. It is found in the secreted. The protein localises to the cell surface. The catalysed reaction is (2R)-2-phosphoglycerate = phosphoenolpyruvate + H2O. The protein operates within carbohydrate degradation; glycolysis; pyruvate from D-glyceraldehyde 3-phosphate: step 4/5. Functionally, catalyzes the reversible conversion of 2-phosphoglycerate (2-PG) into phosphoenolpyruvate (PEP). It is essential for the degradation of carbohydrates via glycolysis. The sequence is that of Enolase from Rhodopseudomonas palustris (strain ATCC BAA-98 / CGA009).